A 347-amino-acid chain; its full sequence is Protein N-terminal asparagine amidohydrolase (347 aa).

The catalysed reaction is N-terminal L-asparaginyl-[protein] + H2O + H(+) = N-terminal L-aspartyl-[protein] + NH4(+). Its function is as follows. N-terminal asparagine deamidase that mediates deamidation of N-terminal asparagine residues to aspartate. Required for the ubiquitin-dependent turnover of intracellular proteins that initiate with Met-Asn. These proteins are acetylated on the retained initiator methionine and can subsequently be modified by the removal of N-acetyl methionine by acylaminoacid hydrolase (AAH). Conversion of the resulting N-terminal asparagine to aspartate by NTAN1 renders the protein susceptible to arginylation, polyubiquitination and degradation as specified by the N-end rule. This enzyme does not act on substrates with internal or C-terminal asparagines and does not act on glutamine residues in any position. Does not seem to be involved in immune response, unlike the N-terminal glutamine amidohydrolase NTAQ1. This chain is Protein N-terminal asparagine amidohydrolase, found in Arabidopsis thaliana (Mouse-ear cress).